Reading from the N-terminus, the 290-residue chain is Ribonuclease 3 (290 aa).

Residues 20–145 enclose the RNase III domain; that stretch reads YSCFYRILGF…FIGAIYLDRG (126 aa). Residue Glu62 coordinates Mg(2+). Asp66 is a catalytic residue. The Mg(2+) site is built by Asn131 and Glu134. Glu134 is a catalytic residue. Positions 173–242 constitute a DRBM domain; the sequence is NFKSKLIEWS…AQMTLKKIKG (70 aa). The segment at 254 to 290 is disordered; the sequence is KTQNNVPAEDTTPESETSLTAENQQIDEIISTEEISV. Residues 267–279 show a composition bias toward polar residues; it reads ESETSLTAENQQI.

This sequence belongs to the ribonuclease III family. Homodimer. It depends on Mg(2+) as a cofactor.

The protein resides in the cytoplasm. It catalyses the reaction Endonucleolytic cleavage to 5'-phosphomonoester.. Its function is as follows. Digests double-stranded RNA. Involved in the processing of primary rRNA transcript to yield the immediate precursors to the large and small rRNAs (23S and 16S). Processes some mRNAs, and tRNAs when they are encoded in the rRNA operon. Processes pre-crRNA and tracrRNA of type II CRISPR loci if present in the organism. This chain is Ribonuclease 3, found in Bacteroides fragilis (strain ATCC 25285 / DSM 2151 / CCUG 4856 / JCM 11019 / LMG 10263 / NCTC 9343 / Onslow / VPI 2553 / EN-2).